We begin with the raw amino-acid sequence, 327 residues long: Fe-S cluster assembly protein DRE2 (327 aa).

Over residues 1 to 14 (MSPATVTIDTTPDF) the composition is skewed to polar residues. Disordered stretches follow at residues 1–20 (MSPA…GGAP) and 153–179 (NKGE…AAAA). The tract at residues 17-144 (GGAPHSTLLL…EKPAEEVAAV (128 aa)) is N-terminal SAM-like domain. The interval 145–214 (PLKFLKKKNK…EDELMTEEDL (70 aa)) is linker. Positions 164-179 (PAAATQPTAPAPAAAA) are enriched in low complexity. 4 residues coordinate [2Fe-2S] cluster: C224, C235, C238, and C240. The tract at residues 224-240 (CAPKPGKKRRACKDCTC) is fe-S binding site A. [4Fe-4S] cluster contacts are provided by C290, C293, C301, and C304. 2 consecutive short sequence motifs (cx2C motif) follow at residues 290–293 (CGSC) and 301–304 (CADC). Positions 290–304 (CGSCALGDAFRCADC) are fe-S binding site B.

The protein belongs to the anamorsin family. In terms of assembly, monomer. Interacts with TAH18. Interacts with MIA40. It depends on [2Fe-2S] cluster as a cofactor. [4Fe-4S] cluster is required as a cofactor.

The protein localises to the cytoplasm. It localises to the mitochondrion intermembrane space. Its function is as follows. Component of the cytosolic iron-sulfur (Fe-S) protein assembly (CIA) machinery required for the maturation of extramitochondrial Fe-S proteins. Part of an electron transfer chain functioning in an early step of cytosolic Fe-S biogenesis, facilitating the de novo assembly of a [4Fe-4S] cluster on the scaffold complex CFD1-NBP35. Electrons are transferred to DRE2 from NADPH via the FAD- and FMN-containing protein TAH18. TAH18-DRE2 are also required for the assembly of the diferric tyrosyl radical cofactor of ribonucleotide reductase (RNR), probably by providing electrons for reduction during radical cofactor maturation in the catalytic small subunit RNR2. The protein is Fe-S cluster assembly protein DRE2 of Pyricularia oryzae (strain 70-15 / ATCC MYA-4617 / FGSC 8958) (Rice blast fungus).